The chain runs to 614 residues: Leucine-rich repeat and immunoglobulin-like domain-containing nogo receptor-interacting protein 1 (614 aa).

The N-terminal stretch at 1–35 is a signal peptide; the sequence is MLAGGVRSMPSPLLACWQPILLLVLGSVLSGSATG. 2 disulfides stabilise this stretch: C36–C42 and C40–C51. An LRRNT domain is found at 36 to 65; the sequence is CPPRCECSAQDRAVLCHRKRFVAVPEGIPT. Residues 36-555 are Extracellular-facing; the sequence is CPPRCECSAQ…FDIKTLIIAT (520 aa). 11 LRR repeats span residues 66 to 87, 90 to 111, 114 to 135, 138 to 159, 162 to 183, 186 to 207, 210 to 231, 258 to 279, 282 to 303, 306 to 327, and 330 to 351; these read ETRLLDLGKNRIKTLNQDEFAS, HLEELELNENIVSAVEPGAFNN, NLRTLGLRSNRLKLIPLGVFTG, NLTKLDISENKIVILLDYMFQD, NLKSLEVGDNDLVYISHRAFSG, SLEQLTLEKCNLTSIPTEALSH, GLIVLRLRHLNINAIRDYSFKR, NLTSLSITHCNLTAVPYLAVRH, YLRFLNLSYNPISTIEGSMLHE, RLQEIQLVGGQLAMVEPYAFRG, and YLRVLNVSGNQLTTLEESVFHS. N138 carries an N-linked (GlcNAc...) asparagine glycan. The N-linked (GlcNAc...) asparagine glycan is linked to N196. 3 N-linked (GlcNAc...) asparagine glycosylation sites follow: N258, N268, and N287. N335 carries N-linked (GlcNAc...) asparagine glycosylation. The LRRCT domain maps to 363–417; sequence NPLACDCRLLWVFRRRWRLNFNRQQPTCATPEFVQGKEFKDFPDVLLPNYFTCRR. Disulfide bonds link C367-C390, C369-C415, and C440-C491. In terms of domain architecture, Ig-like C2-type spans 405–507; it reads PDVLLPNYFT…GNDSMPAHLH (103 aa). 2 N-linked (GlcNAc...) asparagine glycosylation sites follow: N486 and N536. Residues 556 to 576 form a helical membrane-spanning segment; that stretch reads TMGFISFLGVVLFCLVLLFLW. At 577-614 the chain is on the cytoplasmic side; that stretch reads SRGKGNTKHNIEIEYVPRKSDAGISSADAPRKFNMKMI. S596 bears the Phosphoserine mark.

In terms of assembly, homotetramer. Forms a ternary complex with RTN4R/NGFR and RTN4R/TNFRSF19. Interacts with NGRF, RTN4R and MYT1L. In terms of processing, N-glycosylated. Contains predominantly high-mannose glycans.

Its subcellular location is the cell membrane. Functionally, functional component of the Nogo receptor signaling complex (RTN4R/NGFR) in RhoA activation responsible for some inhibition of axonal regeneration by myelin-associated factors. Is also an important negative regulator of oligodentrocyte differentiation and axonal myelination. Acts in conjunction with RTN4 and RTN4R in regulating neuronal precursor cell motility during cortical development. The protein is Leucine-rich repeat and immunoglobulin-like domain-containing nogo receptor-interacting protein 1 (LINGO1) of Macaca fascicularis (Crab-eating macaque).